Here is a 166-residue protein sequence, read N- to C-terminus: Protein SprT (166 aa).

Residues 19 to 164 (REHLAKANLK…CVHCGDLLVA (146 aa)) enclose the SprT-like domain. A Zn(2+)-binding site is contributed by H78. E79 is a catalytic residue. A Zn(2+)-binding site is contributed by H82.

The protein belongs to the SprT family. Zn(2+) is required as a cofactor.

It localises to the cytoplasm. The protein is Protein SprT of Klebsiella pneumoniae (strain 342).